The following is a 152-amino-acid chain: Superoxide dismutase [Cu-Zn] (152 aa).

Cys7 is lipidated: S-palmitoyl cysteine. Cu cation contacts are provided by His47, His49, and His64. Cys58 and Cys146 form a disulfide bridge. His64, His72, His81, and Asp84 together coordinate Zn(2+). His120 lines the Cu cation pocket.

This sequence belongs to the Cu-Zn superoxide dismutase family. In terms of assembly, homodimer. Requires Cu cation as cofactor. Zn(2+) serves as cofactor.

Its subcellular location is the cytoplasm. It is found in the nucleus. It carries out the reaction 2 superoxide + 2 H(+) = H2O2 + O2. Destroys radicals which are normally produced within the cells and which are toxic to biological systems. This is Superoxide dismutase [Cu-Zn] (sod1) from Xiphias gladius (Swordfish).